The sequence spans 415 residues: Carbamoyl phosphate synthase arginine-specific small chain (415 aa).

The transit peptide at 1 to 17 (MLRFLKPFPLRFGKRFY) directs the protein to the mitochondrion. Residues Ser88, Gly272, and Gly274 each contribute to the L-glutamine site. In terms of domain architecture, Glutamine amidotransferase type-1 spans 225–412 (NIAVIDCGVK…IKEAIKYQKS (188 aa)). The active-site Nucleophile is Cys301. L-glutamine contacts are provided by Met302, Gln305, Asn343, Gly345, and Tyr346. Catalysis depends on residues His385 and Glu387.

The protein belongs to the CarA family. As to quaternary structure, heterodimer composed of 2 chains; the small (or glutamine) chain promotes the hydrolysis of glutamine to ammonia, which is used by the large (or ammonia) chain to synthesize carbamoyl phosphate.

The protein localises to the mitochondrion. The protein resides in the cytoplasm. It carries out the reaction hydrogencarbonate + L-glutamine + 2 ATP + H2O = carbamoyl phosphate + L-glutamate + 2 ADP + phosphate + 2 H(+). It catalyses the reaction L-glutamine + H2O = L-glutamate + NH4(+). It participates in amino-acid biosynthesis; L-arginine biosynthesis; carbamoyl phosphate from bicarbonate: step 1/1. In terms of biological role, small subunit of the arginine-specific carbamoyl phosphate synthase (CPSase). CPSase catalyzes the formation of carbamoyl phosphate from the ammonia moiety of glutamine, carbonate, and phosphate donated by ATP, the first step of the arginine biosynthetic pathway. The small subunit (glutamine amidotransferase) binds and cleaves glutamine to supply the large subunit with the substrate ammonia. The protein is Carbamoyl phosphate synthase arginine-specific small chain (arg5) of Schizosaccharomyces pombe (strain 972 / ATCC 24843) (Fission yeast).